The following is a 323-amino-acid chain: o-succinylbenzoate synthase (323 aa).

Lysine 134 acts as the Proton donor in catalysis. Aspartate 162, glutamate 191, and aspartate 214 together coordinate Mg(2+). The active-site Proton acceptor is the lysine 236.

This sequence belongs to the mandelate racemase/muconate lactonizing enzyme family. MenC type 1 subfamily. A divalent metal cation is required as a cofactor.

The catalysed reaction is (1R,6R)-6-hydroxy-2-succinyl-cyclohexa-2,4-diene-1-carboxylate = 2-succinylbenzoate + H2O. Its pathway is quinol/quinone metabolism; 1,4-dihydroxy-2-naphthoate biosynthesis; 1,4-dihydroxy-2-naphthoate from chorismate: step 4/7. It participates in quinol/quinone metabolism; menaquinone biosynthesis. In terms of biological role, converts 2-succinyl-6-hydroxy-2,4-cyclohexadiene-1-carboxylate (SHCHC) to 2-succinylbenzoate (OSB). This Yersinia enterocolitica serotype O:8 / biotype 1B (strain NCTC 13174 / 8081) protein is o-succinylbenzoate synthase.